Here is a 172-residue protein sequence, read N- to C-terminus: Cytidylate kinase (172 aa).

7 to 15 (GLAGTGTTT) is an ATP binding site.

This sequence belongs to the cytidylate kinase family. Type 2 subfamily.

It is found in the cytoplasm. The catalysed reaction is CMP + ATP = CDP + ADP. It catalyses the reaction dCMP + ATP = dCDP + ADP. The sequence is that of Cytidylate kinase from Methanobrevibacter smithii (strain ATCC 35061 / DSM 861 / OCM 144 / PS).